A 336-amino-acid polypeptide reads, in one-letter code: Monoacylglycerol lipase ABHD6 (336 aa).

At 1 to 8 (MDLDVVNM) the chain is on the extracellular side. The chain crosses the membrane as a helical; Signal-anchor for type II membrane protein span at residues 9-29 (FVIAGGTLAIPILAFVASFLL). At 30–336 (WPSALIRIYY…VHNTDNKKLN (307 aa)) the chain is on the cytoplasmic side. The active-site Nucleophile is the Ser148. Catalysis depends on charge relay system residues Asp278 and His306.

Belongs to the AB hydrolase superfamily. In terms of tissue distribution, widely expressed with higher expression in small intestine, liver and brown adipose tissue. In brain, expressed postsynaptically in cortical neurons but not detected in microglia (at protein level).

It localises to the late endosome membrane. The protein resides in the lysosome membrane. It is found in the mitochondrion membrane. It carries out the reaction Hydrolyzes glycerol monoesters of long-chain fatty acids.. The catalysed reaction is 2-(5Z,8Z,11Z,14Z-eicosatetraenoyl)-glycerol + H2O = glycerol + (5Z,8Z,11Z,14Z)-eicosatetraenoate + H(+). It catalyses the reaction 1-octanoylglycerol + H2O = octanoate + glycerol + H(+). The enzyme catalyses 1-decanoylglycerol + H2O = decanoate + glycerol + H(+). It carries out the reaction 1-dodecanoylglycerol + H2O = dodecanoate + glycerol + H(+). The catalysed reaction is 1-tetradecanoylglycerol + H2O = tetradecanoate + glycerol + H(+). It catalyses the reaction 2-hexadecanoylglycerol + H2O = glycerol + hexadecanoate + H(+). The enzyme catalyses 2-(9Z-octadecenoyl)-glycerol + H2O = glycerol + (9Z)-octadecenoate + H(+). It carries out the reaction 1-(9Z-octadecenoyl)-glycerol + H2O = glycerol + (9Z)-octadecenoate + H(+). The catalysed reaction is 2-(9Z,12Z-octadecadienoyl)-glycerol + H2O = (9Z,12Z)-octadecadienoate + glycerol + H(+). It catalyses the reaction 1-(5Z,8Z,11Z,14Z-eicosatetraenoyl)-glycerol + H2O = glycerol + (5Z,8Z,11Z,14Z)-eicosatetraenoate + H(+). The enzyme catalyses 1-(9Z,12Z-octadecadienoyl)-glycerol + H2O = (9Z,12Z)-octadecadienoate + glycerol + H(+). It carries out the reaction 3-(9Z-octadecenoyl)-sn-glycero-1-phospho-(3'-(9Z-octadecenoyl)-1'-sn-glycerol) + H2O = 3-(9Z-octadecenoyl)-sn-glycero-1-phospho-(1'-sn-glycerol) + (9Z)-octadecenoate + H(+). The catalysed reaction is (S,S)-2-(9Z-octadecenoyl)-sn-glycero-1-phospho-(2'-(9Z-octadecenoyl)-1'-sn-glycerol) + H2O = (S,S)-2-(9Z-octadecenoyl)-sn-glycero-1-phospho-(1'-sn-glycerol) + (9Z)-octadecenoate + H(+). It catalyses the reaction (R,R)-2-(9Z-octadecenoyl)-sn-glycero-3-phospho-(2'-(9Z-octadecenoyl)-3'-sn-glycerol) + H2O = (R,R)-2-(9Z-octadecenoyl)-sn-glycero-3-phospho-(3'-sn-glycerol) + (9Z)-octadecenoate + H(+). In terms of biological role, lipase that preferentially hydrolysis medium-chain saturated monoacylglycerols including 2-arachidonoylglycerol. Through 2-arachidonoylglycerol degradation may regulate endocannabinoid signaling pathways. Also has a lysophosphatidyl lipase activity with a preference for lysophosphatidylglycerol among other lysophospholipids. Also able to degrade bis(monoacylglycero)phosphate (BMP) and constitutes the major enzyme for BMP catabolism. BMP, also known as lysobisphosphatidic acid, is enriched in late endosomes and lysosomes and plays a key role in the formation of intraluminal vesicles and in lipid sorting. The sequence is that of Monoacylglycerol lipase ABHD6 from Mus musculus (Mouse).